The chain runs to 281 residues: Beta-etherase (281 aa).

One can recognise a GST N-terminal domain in the interval 11–87; that stretch reads DLQLESGCTI…YLDEKYPDRP (77 aa). A disordered region spans residues 244–281; it reads GDPEPFVRQTGPAGAGGQALNKGPQTTKMPPRVAEKAD.

Belongs to the GST superfamily.

It is found in the cell inner membrane. Able to degrade various dimeric lignin compounds. Catalyzes the unique and reductive cleavage of arylglycerol-beta-aryl ether. The polypeptide is Beta-etherase (ligE) (Sphingobium sp. (strain NBRC 103272 / SYK-6)).